The sequence spans 140 residues: ATP synthase epsilon chain (140 aa).

Belongs to the ATPase epsilon chain family. F-type ATPases have 2 components, CF(1) - the catalytic core - and CF(0) - the membrane proton channel. CF(1) has five subunits: alpha(3), beta(3), gamma(1), delta(1), epsilon(1). CF(0) has three main subunits: a, b and c.

It is found in the cell inner membrane. Produces ATP from ADP in the presence of a proton gradient across the membrane. The polypeptide is ATP synthase epsilon chain (Xanthomonas campestris pv. campestris (strain 8004)).